The primary structure comprises 65 residues: Large ribosomal subunit protein bL35 (65 aa).

It belongs to the bacterial ribosomal protein bL35 family.

The protein is Large ribosomal subunit protein bL35 of Wolbachia sp. subsp. Brugia malayi (strain TRS).